We begin with the raw amino-acid sequence, 739 residues long: Catalase-peroxidase 2 (739 aa).

Positions 1–26 are cleaved as a signal peptide; it reads MKKSTIPTLSALTLAMSLAFGGSVIA. A cross-link (tryptophyl-tyrosyl-methioninium (Trp-Tyr) (with M-253)) is located at residues 105–227; it reads WHSAGVYRIF…MGATQMGLIY (123 aa). His106 serves as the catalytic Proton acceptor. Residues 227-253 constitute a cross-link (tryptophyl-tyrosyl-methioninium (Tyr-Met) (with W-105)); sequence YVNPEGPNGVPDPLASAKEIRDTFGRM. His268 contributes to the heme b binding site.

The protein belongs to the peroxidase family. Peroxidase/catalase subfamily. As to quaternary structure, homodimer or homotetramer. Requires heme b as cofactor. In terms of processing, formation of the three residue Trp-Tyr-Met cross-link is important for the catalase, but not the peroxidase activity of the enzyme.

The catalysed reaction is H2O2 + AH2 = A + 2 H2O. The enzyme catalyses 2 H2O2 = O2 + 2 H2O. Functionally, bifunctional enzyme with both catalase and broad-spectrum peroxidase activity. The chain is Catalase-peroxidase 2 from Shewanella sp. (strain MR-7).